Here is a 272-residue protein sequence, read N- to C-terminus: Phosphatidylglycerol--prolipoprotein diacylglyceryl transferase (272 aa).

The next 4 membrane-spanning stretches (helical) occupy residues 24 to 44 (WYAL…RHLV), 64 to 84 (LLVY…VVFY), 99 to 119 (LWQG…GVML), and 125 to 145 (GLPT…GLFL). Arginine 147 lines the a 1,2-diacyl-sn-glycero-3-phospho-(1'-sn-glycerol) pocket. Transmembrane regions (helical) follow at residues 185-205 (AAAE…LGAL), 209-229 (GLVT…CEFF), and 245-265 (MGML…AFAY).

Belongs to the Lgt family.

The protein resides in the cell inner membrane. It catalyses the reaction L-cysteinyl-[prolipoprotein] + a 1,2-diacyl-sn-glycero-3-phospho-(1'-sn-glycerol) = an S-1,2-diacyl-sn-glyceryl-L-cysteinyl-[prolipoprotein] + sn-glycerol 1-phosphate + H(+). Its pathway is protein modification; lipoprotein biosynthesis (diacylglyceryl transfer). In terms of biological role, catalyzes the transfer of the diacylglyceryl group from phosphatidylglycerol to the sulfhydryl group of the N-terminal cysteine of a prolipoprotein, the first step in the formation of mature lipoproteins. The sequence is that of Phosphatidylglycerol--prolipoprotein diacylglyceryl transferase from Methylocella silvestris (strain DSM 15510 / CIP 108128 / LMG 27833 / NCIMB 13906 / BL2).